Here is a 278-residue protein sequence, read N- to C-terminus: Undecaprenyl-diphosphatase 1 (278 aa).

Helical transmembrane passes span 46-66 (VVGF…VYFF), 91-111 (YTFT…GLAA), 119-139 (LASL…MWFA), 153-173 (SLPD…FPGF), 191-211 (VAAT…AGLY), 225-245 (PLAV…AWLL), and 256-276 (FIIY…GGAI).

This sequence belongs to the UppP family.

It localises to the cell membrane. It catalyses the reaction di-trans,octa-cis-undecaprenyl diphosphate + H2O = di-trans,octa-cis-undecaprenyl phosphate + phosphate + H(+). Functionally, catalyzes the dephosphorylation of undecaprenyl diphosphate (UPP). Confers resistance to bacitracin. This is Undecaprenyl-diphosphatase 1 from Frankia alni (strain DSM 45986 / CECT 9034 / ACN14a).